The sequence spans 504 residues: Probable ergothioneine transporter EgtUBC (504 aa).

One can recognise an ABC transmembrane type-1 domain in the interval Leu-19–Leu-198. A run of 6 helical transmembrane segments spans residues Ile-25–Leu-44, Val-57–Ile-74, Ile-81–Leu-97, Met-146–Leu-170, Leu-179–Leu-198, and Ile-210–Phe-229. The ergothioneine binding domain stretch occupies residues Ser-231–Lys-504.

It in the N-terminal section; belongs to the binding-protein-dependent transport system permease family. The protein in the C-terminal section; belongs to the OsmX family. The complex is probably composed of at least an ATP-binding protein (EgtUA) and a transmembrane protein (EgtUBC).

It is found in the membrane. Its function is as follows. Part of an ABC transporter complex EgtU required for the uptake of ergothioneine (EGT), a natural low-molecular weight (LMW) thiol antioxidant. Responsible for the translocation of the substrate across the membrane. Also contains a C-terminal periplasmic solute-binding domain (SBD) which binds to EGT with sub-micromolar affinity. Does not bind glycine betaine, carnitine, choline, proline, or cholate. Plays a role in bile acid tolerance. Dispensable for choline uptake. Probably not involved in betaine, carnitine or choline mediated osmo- or chill tolerance. Plays a role in enhancing virulence in mice. The sequence is that of Probable ergothioneine transporter EgtUBC from Listeria monocytogenes serovar 1/2a (strain ATCC BAA-679 / EGD-e).